The following is a 77-amino-acid chain: UPF0337 protein CE0198 (77 aa).

The segment at 1–77 (MGDLSNKAEG…PDVEHPEAVN (77 aa)) is disordered. 2 stretches are compositionally biased toward basic and acidic residues: residues 30–56 (DEGRADQTKADIKEAVSDAGDKIKDGA) and 64–77 (QDKDPDVEHPEAVN).

This sequence belongs to the UPF0337 (CsbD) family.

The protein is UPF0337 protein CE0198 of Corynebacterium efficiens (strain DSM 44549 / YS-314 / AJ 12310 / JCM 11189 / NBRC 100395).